A 338-amino-acid polypeptide reads, in one-letter code: MMNDALTSLACSLKPGTTIKGKWNGNTYTLRKQLGKGANGIVYLAETSDGHVALKVSDDSLSITSEVNVLKSFSKAQSVTMGPSFFDTDDAYIPSANTKVSFYAMEYIKGPLLLKYVSDKGAEWIPVLMIQLLSSLSVLHQQGWIFGDLKPDNLIVTGPPARIRCIDVGGTTKEGRAIKEYTEFYDRGYWGYGTRKAEPSYDLFAVAMIMINSVHKKEFKKTNQPKEQLRSLIEGNPLLQKYKKALFSALNGDYQSADEMKKDMLDAGQKAAQRKQPIKASPQPATRQRQQKPRQGKITKTRYTPKQKPAKSGGLFETTLIVISVLALYFAYIIFFLI.

Residues 28 to 286 form the Protein kinase domain; it reads YTLRKQLGKG…PIKASPQPAT (259 aa). ATP-binding positions include 34–42 and K55; that span reads LGKGANGIV. The Proton acceptor role is filled by D148. The tract at residues 266-312 is disordered; the sequence is DAGQKAAQRKQPIKASPQPATRQRQQKPRQGKITKTRYTPKQKPAKS. Residues 289–309 show a composition bias toward basic residues; sequence RQQKPRQGKITKTRYTPKQKP.

It belongs to the protein kinase superfamily. Ser/Thr protein kinase family. In terms of processing, autophosphorylated.

The catalysed reaction is L-seryl-[protein] + ATP = O-phospho-L-seryl-[protein] + ADP + H(+). It carries out the reaction L-threonyl-[protein] + ATP = O-phospho-L-threonyl-[protein] + ADP + H(+). Functionally, plays a role in the cell's commitment to sporulation; phosphorylates DNA replication initiation-control protein YabA. Deletion of this kinase delays entry into sporulation but does not affect final spore yield. Overexpression decreases biofilm formation; phosphorylation of YabA probably prevents biofilm formation. This chain is Serine/threonine-protein kinase YabT (yabT), found in Bacillus subtilis (strain 168).